The following is a 287-amino-acid chain: 5'-3' exonuclease (287 aa).

The 99-residue stretch at 172-270 folds into the 5'-3' exonuclease domain; it reads IYPKEFIDLL…ITSEEITLKK (99 aa).

5'-3' exonuclease acting preferentially on double-stranded DNA. This is 5'-3' exonuclease (pol) from Buchnera aphidicola subsp. Schizaphis graminum (strain Sg).